The primary structure comprises 640 residues: DNA mismatch repair protein MutL (640 aa).

Residues 343-389 form a disordered region; it reads TKNTATDQRAENLEVKPDSKEKELQPKESQHPRLVACDLPSGKIMPP. The span at 350–373 shows a compositional bias: basic and acidic residues; that stretch reads QRAENLEVKPDSKEKELQPKESQH.

This sequence belongs to the DNA mismatch repair MutL/HexB family.

Its function is as follows. This protein is involved in the repair of mismatches in DNA. It is required for dam-dependent methyl-directed DNA mismatch repair. May act as a 'molecular matchmaker', a protein that promotes the formation of a stable complex between two or more DNA-binding proteins in an ATP-dependent manner without itself being part of a final effector complex. This is DNA mismatch repair protein MutL from Desulforamulus reducens (strain ATCC BAA-1160 / DSM 100696 / MI-1) (Desulfotomaculum reducens).